Reading from the N-terminus, the 172-residue chain is Large ribosomal subunit protein uL10 (172 aa).

The protein belongs to the universal ribosomal protein uL10 family. As to quaternary structure, part of the ribosomal stalk of the 50S ribosomal subunit. The N-terminus interacts with L11 and the large rRNA to form the base of the stalk. The C-terminus forms an elongated spine to which L12 dimers bind in a sequential fashion forming a multimeric L10(L12)X complex.

Its function is as follows. Forms part of the ribosomal stalk, playing a central role in the interaction of the ribosome with GTP-bound translation factors. The chain is Large ribosomal subunit protein uL10 from Macrococcus caseolyticus (strain JCSC5402) (Macrococcoides caseolyticum).